The following is a 97-amino-acid chain: MTEREFVSVFRSSKKGDTYLFVRRGQKWDDLPEALRGIFGSPIHSMDLLLTPDKKLARTTGKEVLAAIEEKDFFLQMPEEQDTYIVDFKRKIEQHRK.

The 85-residue stretch at 5-89 (EFVSVFRSSK…EQDTYIVDFK (85 aa)) folds into the YcgL domain.

This Marinobacter nauticus (strain ATCC 700491 / DSM 11845 / VT8) (Marinobacter aquaeolei) protein is YcgL domain-containing protein Maqu_1609.